Consider the following 202-residue polypeptide: dITP/XTP pyrophosphatase (202 aa).

8–13 lines the substrate pocket; sequence TKNMGK. Mg(2+) contacts are provided by E41 and D70. Catalysis depends on D70, which acts as the Proton acceptor. Residues S71, 155 to 158, K178, and 183 to 184 each bind substrate; these read FGYD and HR.

Belongs to the HAM1 NTPase family. As to quaternary structure, homodimer. The cofactor is Mg(2+).

It carries out the reaction XTP + H2O = XMP + diphosphate + H(+). It catalyses the reaction dITP + H2O = dIMP + diphosphate + H(+). The enzyme catalyses ITP + H2O = IMP + diphosphate + H(+). Functionally, pyrophosphatase that catalyzes the hydrolysis of nucleoside triphosphates to their monophosphate derivatives, with a high preference for the non-canonical purine nucleotides XTP (xanthosine triphosphate), dITP (deoxyinosine triphosphate) and ITP. Seems to function as a house-cleaning enzyme that removes non-canonical purine nucleotides from the nucleotide pool, thus preventing their incorporation into DNA/RNA and avoiding chromosomal lesions. This is dITP/XTP pyrophosphatase from Bacillus anthracis.